The primary structure comprises 103 residues: 11.2 kDa protein (103 aa).

This is 11.2 kDa protein from Pseudomonas phage Pf1 (Bacteriophage Pf1).